The following is a 345-amino-acid chain: MSSIRLTQYSHGAGCGCKISPKVLDTILKSQIPGFDDPTLVVGNSSKDDAAVVDIGNGQGIVSTTDFFMPIVDDPFTFGRIAATNAISDIYAMGGKPIVAIAILGWPINTLAPEIAQQVIDGGRQVCHEAGISLAGGHSIDAPEPIFGLAVTGIVPLDAIKQNDTAQAGDILYLTKPLGIGILTTAQKKGKLKPEHEQLAPNAMCTLNKIGQRFAELPGVHAMTDVTGFGLAGHLLEMCEGSGVCATLDFKALPLLDEVDYYLSEGCVPGGTLRNFDSYGAKLGAMDERTRNIMCDPQTSGGLLVAVGKESEAELLAIATQAGLTLSPIGQLKAYTGNQFIEVIQ.

Residue Cys15 is part of the active site. Residues Lys18 and 46-48 (SKD) each bind ATP. Position 49 (Asp49) interacts with Mg(2+). Residues Asp66, Asp89, and 137–139 (GHS) contribute to the ATP site. Asp89 contacts Mg(2+). Asp225 serves as a coordination point for Mg(2+).

It belongs to the selenophosphate synthase 1 family. Class I subfamily. Homodimer. Mg(2+) serves as cofactor.

The enzyme catalyses hydrogenselenide + ATP + H2O = selenophosphate + AMP + phosphate + 2 H(+). Synthesizes selenophosphate from selenide and ATP. The protein is Selenide, water dikinase of Aeromonas salmonicida (strain A449).